We begin with the raw amino-acid sequence, 76 residues long: Acyl carrier protein (76 aa).

Residues 1-76 (MSVEEKVKKI…DAIDYVSNKQ (76 aa)) form the Carrier domain. Ser36 bears the O-(pantetheine 4'-phosphoryl)serine mark.

The protein belongs to the acyl carrier protein (ACP) family. Post-translationally, 4'-phosphopantetheine is transferred from CoA to a specific serine of apo-ACP by AcpS. This modification is essential for activity because fatty acids are bound in thioester linkage to the sulfhydryl of the prosthetic group.

The protein localises to the cytoplasm. Its pathway is lipid metabolism; fatty acid biosynthesis. Carrier of the growing fatty acid chain in fatty acid biosynthesis. This chain is Acyl carrier protein, found in Nitratidesulfovibrio vulgaris (strain ATCC 29579 / DSM 644 / CCUG 34227 / NCIMB 8303 / VKM B-1760 / Hildenborough) (Desulfovibrio vulgaris).